A 162-amino-acid chain; its full sequence is Blue copper protein 1b (162 aa).

Positions 1 to 23 (MASSRVVLILSISMVLLSSVAIA) are cleaved as a signal peptide. The Phytocyanin domain occupies 25-125 (TDYIVGDDKG…QMKLVITVLA (101 aa)). Residue H65 participates in Cu cation binding. An N-linked (GlcNAc...) asparagine glycan is attached at N71. Residues C78 and C112 are joined by a disulfide bond. Cu cation contacts are provided by C106, H111, and M117. A helical transmembrane segment spans residues 142–162 (VVSSLFGVVMAIMVAIAVIFA).

It localises to the membrane. The protein is Blue copper protein 1b of Medicago truncatula (Barrel medic).